Reading from the N-terminus, the 350-residue chain is Probable dual-specificity RNA methyltransferase RlmN (350 aa).

The active-site Proton acceptor is E91. The Radical SAM core domain maps to 97-327; sequence YHHGNSVCIS…VTIRREMGRD (231 aa). A disulfide bridge connects residues C104 and C332. 3 residues coordinate [4Fe-4S] cluster: C111, C115, and C118. Residues 158–159, S190, 213–215, and N289 contribute to the S-adenosyl-L-methionine site; these read GE and SLH. The active-site S-methylcysteine intermediate is C332.

It belongs to the radical SAM superfamily. RlmN family. It depends on [4Fe-4S] cluster as a cofactor.

The protein localises to the cytoplasm. The catalysed reaction is adenosine(2503) in 23S rRNA + 2 reduced [2Fe-2S]-[ferredoxin] + 2 S-adenosyl-L-methionine = 2-methyladenosine(2503) in 23S rRNA + 5'-deoxyadenosine + L-methionine + 2 oxidized [2Fe-2S]-[ferredoxin] + S-adenosyl-L-homocysteine. The enzyme catalyses adenosine(37) in tRNA + 2 reduced [2Fe-2S]-[ferredoxin] + 2 S-adenosyl-L-methionine = 2-methyladenosine(37) in tRNA + 5'-deoxyadenosine + L-methionine + 2 oxidized [2Fe-2S]-[ferredoxin] + S-adenosyl-L-homocysteine. In terms of biological role, specifically methylates position 2 of adenine 2503 in 23S rRNA and position 2 of adenine 37 in tRNAs. The sequence is that of Probable dual-specificity RNA methyltransferase RlmN from Lachnospira eligens (strain ATCC 27750 / DSM 3376 / VPI C15-48 / C15-B4) (Eubacterium eligens).